The following is a 195-amino-acid chain: 3-isopropylmalate dehydratase small subunit (195 aa).

Belongs to the LeuD family. LeuD type 1 subfamily. In terms of assembly, heterodimer of LeuC and LeuD.

It catalyses the reaction (2R,3S)-3-isopropylmalate = (2S)-2-isopropylmalate. The protein operates within amino-acid biosynthesis; L-leucine biosynthesis; L-leucine from 3-methyl-2-oxobutanoate: step 2/4. Its function is as follows. Catalyzes the isomerization between 2-isopropylmalate and 3-isopropylmalate, via the formation of 2-isopropylmaleate. The protein is 3-isopropylmalate dehydratase small subunit of Thermobifida fusca (strain YX).